The following is a 259-amino-acid chain: uncharacterized protein (259 aa).

Residues 158 to 187 are a coiled coil; sequence VELHLKIIEEDMKETTKKNKEKKQNSQSQE. Positions 172–181 are enriched in basic and acidic residues; it reads TTKKNKEKKQ. Disordered regions lie at residues 172 to 197 and 217 to 240; these read TTKKNKEKKQNSQSQEISNSIEMEVS and PVKKTSSASKSDSDKKNKRQQLSK. Low complexity-rich tracts occupy residues 182–193 and 217–226; these read NSQSQEISNSIE and PVKKTSSASK.

This is an uncharacterized protein from Acanthamoeba polyphaga mimivirus (APMV).